The sequence spans 491 residues: Ketol-acid reductoisomerase (NADP(+)) (491 aa).

Positions 16–207 (IKKCRFMKEN…GGHRAGVLES (192 aa)) constitute a KARI N-terminal Rossmann domain. NADP(+)-binding positions include 44–47 (CGSQ), lysine 67, serine 77, and 107–109 (DKQ). Residue histidine 131 is part of the active site. Glycine 157 lines the NADP(+) pocket. KARI C-terminal knotted domains lie at 208–344 (SFIA…NILS) and 345–484 (YSEK…MKEM). Residues aspartate 216, glutamate 220, glutamate 389, and glutamate 393 each coordinate Mg(2+). A substrate-binding site is contributed by serine 414.

This sequence belongs to the ketol-acid reductoisomerase family. It depends on Mg(2+) as a cofactor.

It carries out the reaction (2R)-2,3-dihydroxy-3-methylbutanoate + NADP(+) = (2S)-2-acetolactate + NADPH + H(+). The enzyme catalyses (2R,3R)-2,3-dihydroxy-3-methylpentanoate + NADP(+) = (S)-2-ethyl-2-hydroxy-3-oxobutanoate + NADPH + H(+). It participates in amino-acid biosynthesis; L-isoleucine biosynthesis; L-isoleucine from 2-oxobutanoate: step 2/4. The protein operates within amino-acid biosynthesis; L-valine biosynthesis; L-valine from pyruvate: step 2/4. Its function is as follows. Involved in the biosynthesis of branched-chain amino acids (BCAA). Catalyzes an alkyl-migration followed by a ketol-acid reduction of (S)-2-acetolactate (S2AL) to yield (R)-2,3-dihydroxy-isovalerate. In the isomerase reaction, S2AL is rearranged via a Mg-dependent methyl migration to produce 3-hydroxy-3-methyl-2-ketobutyrate (HMKB). In the reductase reaction, this 2-ketoacid undergoes a metal-dependent reduction by NADPH to yield (R)-2,3-dihydroxy-isovalerate. The polypeptide is Ketol-acid reductoisomerase (NADP(+)) (Buchnera aphidicola subsp. Schizaphis graminum (strain Sg)).